The following is a 211-amino-acid chain: Arginine exporter protein ArgO (211 aa).

6 consecutive transmembrane segments (helical) span residues 1 to 21, 37 to 57, 68 to 88, 111 to 131, 147 to 167, and 179 to 199; these read MISY…PLGP, LMIA…GIFG, LLAL…FGAL, IIAT…DTFV, WFAL…ALLA, and AQRI…FQLA.

It belongs to the LysE/ArgO transporter (TC 2.A.75) family.

The protein resides in the cell inner membrane. The catalysed reaction is L-arginine(in) = L-arginine(out). In terms of biological role, involved in the export of arginine. Important to control the intracellular level of arginine and the correct balance between arginine and lysine. The polypeptide is Arginine exporter protein ArgO (Salmonella schwarzengrund (strain CVM19633)).